The primary structure comprises 342 residues: Lumican (342 aa).

Positions 1–18 are cleaved as a signal peptide; the sequence is MNLGVFPLLLALIGGASS. Tyrosine 20, tyrosine 23, and tyrosine 34 each carry sulfotyrosine. Positions 32-70 constitute an LRRNT domain; sequence ALYGRSSPNCAPECNCPESYPSAMYCDELKLKSVPMVPP. LRR repeat units lie at residues 71–92, 95–118, 121–141, 142–163, 164–185, 189–209, 210–231, and 234–254; these read GIKYLYLRNNQIDHIDDKAFEN, DLQWLILDHNLLENSKIKGKVFSK, QLKKLHINYNNLTESVGPLPK, SLVDLQLTNNKISKLGSFDGLV, NLTFIHLQHNQLKEDAVSAALK, SLEYLDLSFNQMTKLPSGLPV, SLLTLYLDNNKISNIPDEYFKR, and ALQYLRLSHNELADSGVPGNS. Asparagine 92 carries N-linked (GlcNAc...) (keratan sulfate) asparagine glycosylation. Asparagine 131 carries an N-linked (GlcNAc...) (keratan sulfate) asparagine glycan. Residue asparagine 164 is glycosylated (N-linked (GlcNAc...) (keratan sulfate) asparagine). N-linked (GlcNAc...) (keratan sulfate) asparagine glycosylation occurs at asparagine 256. 2 LRR repeats span residues 259–280 and 281–300; these read SLLELDLSYNKLKSIPTVNENL and ENYYLEVNELEKFDVKSFCK. Cysteine 299 and cysteine 332 are disulfide-bonded. At serine 308 the chain carries Phosphoserine. The LRR 11 repeat unit spans residues 309–330; sequence KIKHLRLDGNHITQTSLPPDMY.

It belongs to the small leucine-rich proteoglycan (SLRP) family. SLRP class II subfamily. Binds to laminin. In terms of processing, sulfated on tyrosine residue(s). Post-translationally, contains keratan sulfate. In terms of tissue distribution, cornea and other tissues.

Its subcellular location is the secreted. The protein resides in the extracellular space. It is found in the extracellular matrix. The polypeptide is Lumican (LUM) (Bos taurus (Bovine)).